We begin with the raw amino-acid sequence, 269 residues long: dITP/XTP pyrophosphatase (269 aa).

22–27 (SNNAHK) provides a ligand contact to substrate. Aspartate 82 functions as the Proton acceptor in the catalytic mechanism. Aspartate 82 lines the Mg(2+) pocket. Substrate contacts are provided by residues serine 83, 165-168 (FGYD), lysine 188, and 193-194 (HR).

It belongs to the HAM1 NTPase family. In terms of assembly, homodimer. Mg(2+) is required as a cofactor.

The enzyme catalyses XTP + H2O = XMP + diphosphate + H(+). It carries out the reaction dITP + H2O = dIMP + diphosphate + H(+). The catalysed reaction is ITP + H2O = IMP + diphosphate + H(+). In terms of biological role, pyrophosphatase that catalyzes the hydrolysis of nucleoside triphosphates to their monophosphate derivatives, with a high preference for the non-canonical purine nucleotides XTP (xanthosine triphosphate), dITP (deoxyinosine triphosphate) and ITP. Seems to function as a house-cleaning enzyme that removes non-canonical purine nucleotides from the nucleotide pool, thus preventing their incorporation into DNA/RNA and avoiding chromosomal lesions. The chain is dITP/XTP pyrophosphatase from Treponema pallidum (strain Nichols).